Reading from the N-terminus, the 430-residue chain is Probable carboxypeptidase AFLA_037450 (430 aa).

The signal sequence occupies residues 1-16 (MKSIYSLVLCTALTAA). N84 carries an N-linked (GlcNAc...) asparagine glycan. Residue D156 participates in Zn(2+) binding. The Proton acceptor role is filled by E188. Residue E189 coordinates Zn(2+). Residue N285 is glycosylated (N-linked (GlcNAc...) asparagine).

Belongs to the peptidase M20A family. It depends on Zn(2+) as a cofactor.

The protein resides in the secreted. This is Probable carboxypeptidase AFLA_037450 from Aspergillus flavus (strain ATCC 200026 / FGSC A1120 / IAM 13836 / NRRL 3357 / JCM 12722 / SRRC 167).